The following is a 471-amino-acid chain: Trigger factor (471 aa).

A PPIase FKBP-type domain is found at glutamate 169–leucine 254. Residues valine 435–alanine 471 form a disordered region. The span at lysine 461 to alanine 471 shows a compositional bias: basic and acidic residues.

This sequence belongs to the FKBP-type PPIase family. Tig subfamily.

The protein resides in the cytoplasm. The enzyme catalyses [protein]-peptidylproline (omega=180) = [protein]-peptidylproline (omega=0). Involved in protein export. Acts as a chaperone by maintaining the newly synthesized protein in an open conformation. Functions as a peptidyl-prolyl cis-trans isomerase. In Brucella abortus (strain S19), this protein is Trigger factor.